The sequence spans 81 residues: Penaeidin-3c (81 aa).

Positions 1–19 (MRLVVCLVFLASFALVCQG) are cleaved as a signal peptide. Gln-20 is subject to Pyrrolidone carboxylic acid. Disulfide bonds link Cys-50–Cys-65, Cys-54–Cys-72, and Cys-66–Cys-73. Ser-80 carries the serine amide modification.

This sequence belongs to the penaeidin family. Higher expression in hemocytes and to a lesser extent in heart, testis, gills, intestine, lymphoid organ and hepatopancreas. Traces in eyes and subcuticular epithelium. Not present in the brain.

It is found in the cytoplasmic granule. Functionally, antibacterial activity against M.luteus and E.coli bacteria. Antifungal activity against N.crassa and F.oxysporum. Presents chitin-binding activity. This chain is Penaeidin-3c, found in Penaeus vannamei (Whiteleg shrimp).